The chain runs to 61 residues: Large ribosomal subunit protein bL32 (61 aa).

The span at Met-1 to Arg-16 shows a compositional bias: basic residues. The interval Met-1–His-41 is disordered. Positions Val-28 to His-41 are enriched in basic and acidic residues.

This sequence belongs to the bacterial ribosomal protein bL32 family.

This chain is Large ribosomal subunit protein bL32, found in Rhizobium rhizogenes (strain K84 / ATCC BAA-868) (Agrobacterium radiobacter).